The following is a 314-amino-acid chain: Olfactory receptor 5G3 (314 aa).

At 1–24 (MEDKNQTVVTEFLLLGLTDHPYQK) the chain is on the extracellular side. Asn5 is a glycosylation site (N-linked (GlcNAc...) asparagine). The chain crosses the membrane as a helical span at residues 25 to 45 (IVLFFMFLFVYLITLGGNLGM). Residues 46 to 97 (ITLIWIDPRLHTPMYFFLRHLSFVDICSSSSVVPKMLCNIFAEKKDITFLGC) are Cytoplasmic-facing. Residues Cys97 and Cys179 are joined by a disulfide bond. Residues 98-118 (AAQMWFFGLFEAAECFLLAAM) traverse the membrane as a helical segment. Residues 119-143 (AYDRYVAICKPLLYTLIMSQQVCMQ) are Extracellular-facing. A helical transmembrane segment spans residues 144–164 (LVVGPYAMALISTMTHTIFTF). The Cytoplasmic segment spans residues 165–167 (CLP). The chain crosses the membrane as a helical span at residues 168 to 188 (FCGSNIINHFFCDIFPLLSLA). Residues 189 to 196 (CADTWVNK) lie on the Extracellular side of the membrane. Residues 197-217 (FVLFVLAGAIGVLSGLIIMVS) form a helical membrane-spanning segment. Residues 218-237 (YICILMTILKIQTADGKQKA) lie on the Cytoplasmic side of the membrane. Residues 238-258 (FFTCFSHLAAVSILYGTLFLI) form a helical membrane-spanning segment. At 259–268 (YVRPSSSSSL) the chain is on the extracellular side. A helical transmembrane segment spans residues 269-289 (GIYKVISLFYTVVIPMVNPLI). The Cytoplasmic segment spans residues 290-314 (YSLRNKEVKDAFRRKIERKKFIIGR).

This sequence belongs to the G-protein coupled receptor 1 family.

It localises to the cell membrane. Functionally, odorant receptor. The sequence is that of Olfactory receptor 5G3 (OR5G3) from Homo sapiens (Human).